Reading from the N-terminus, the 154-residue chain is Small ribosomal subunit protein uS19 (154 aa).

Belongs to the universal ribosomal protein uS19 family.

The polypeptide is Small ribosomal subunit protein uS19 (RPS15) (Oryza sativa subsp. japonica (Rice)).